A 37-amino-acid chain; its full sequence is Cytochrome b6-f complex subunit 5 (37 aa).

Residues 5-25 form a helical membrane-spanning segment; that stretch reads LLFGIVLGLIPVTLTGLFVAA.

Belongs to the PetG family. As to quaternary structure, the 4 large subunits of the cytochrome b6-f complex are cytochrome b6, subunit IV (17 kDa polypeptide, PetD), cytochrome f and the Rieske protein, while the 4 small subunits are PetG, PetL, PetM and PetN. The complex functions as a dimer.

It is found in the plastid. The protein localises to the chloroplast thylakoid membrane. In terms of biological role, component of the cytochrome b6-f complex, which mediates electron transfer between photosystem II (PSII) and photosystem I (PSI), cyclic electron flow around PSI, and state transitions. PetG is required for either the stability or assembly of the cytochrome b6-f complex. The protein is Cytochrome b6-f complex subunit 5 of Guillardia theta (Cryptophyte).